The chain runs to 300 residues: tRNA pseudouridine synthase B (300 aa).

Aspartate 44 functions as the Nucleophile in the catalytic mechanism.

It belongs to the pseudouridine synthase TruB family. Type 1 subfamily.

It carries out the reaction uridine(55) in tRNA = pseudouridine(55) in tRNA. Functionally, responsible for synthesis of pseudouridine from uracil-55 in the psi GC loop of transfer RNAs. In Corynebacterium diphtheriae (strain ATCC 700971 / NCTC 13129 / Biotype gravis), this protein is tRNA pseudouridine synthase B.